Consider the following 243-residue polypeptide: Adenosylcobinamide-GDP ribazoletransferase (243 aa).

5 consecutive transmembrane segments (helical) span residues 31–51 (LLFY…FNAL), 55–75 (APLL…SGGL), 109–129 (IAVV…VALI), 135–155 (IGLL…FLGT), and 188–208 (VVLA…CFYW).

Belongs to the CobS family. Mg(2+) is required as a cofactor.

The protein resides in the cell inner membrane. It carries out the reaction alpha-ribazole + adenosylcob(III)inamide-GDP = adenosylcob(III)alamin + GMP + H(+). It catalyses the reaction alpha-ribazole 5'-phosphate + adenosylcob(III)inamide-GDP = adenosylcob(III)alamin 5'-phosphate + GMP + H(+). Its pathway is cofactor biosynthesis; adenosylcobalamin biosynthesis; adenosylcobalamin from cob(II)yrinate a,c-diamide: step 7/7. Functionally, joins adenosylcobinamide-GDP and alpha-ribazole to generate adenosylcobalamin (Ado-cobalamin). Also synthesizes adenosylcobalamin 5'-phosphate from adenosylcobinamide-GDP and alpha-ribazole 5'-phosphate. This Pseudomonas syringae pv. tomato (strain ATCC BAA-871 / DC3000) protein is Adenosylcobinamide-GDP ribazoletransferase.